A 111-amino-acid polypeptide reads, in one-letter code: Translation initiation factor 1A 1 (111 aa).

Residues 1-28 (MTLADLKKPTSRASPSTEETVTRVRTPR) form a disordered region. Residues 22–96 (TRVRTPRREN…EKADVIWKYT (75 aa)) enclose the S1-like domain.

The protein belongs to the eIF-1A family.

Its function is as follows. Seems to be required for maximal rate of protein biosynthesis. Enhances ribosome dissociation into subunits and stabilizes the binding of the initiator Met-tRNA(I) to 40 S ribosomal subunits. The sequence is that of Translation initiation factor 1A 1 (eIF1A1) from Methanosarcina mazei (strain ATCC BAA-159 / DSM 3647 / Goe1 / Go1 / JCM 11833 / OCM 88) (Methanosarcina frisia).